Consider the following 394-residue polypeptide: S-adenosylmethionine synthase (394 aa).

His-15 contacts ATP. Asp-17 contacts Mg(2+). Glu-43 lines the K(+) pocket. L-methionine is bound by residues Glu-56 and Gln-99. Residues 99-109 (QSPDIALGVNK) form a flexible loop region. ATP is bound by residues 173 to 175 (DGK), 239 to 240 (RF), Asp-248, 254 to 255 (RK), Ala-271, and Lys-275. Position 248 (Asp-248) interacts with L-methionine. Lys-279 serves as a coordination point for L-methionine.

The protein belongs to the AdoMet synthase family. In terms of assembly, homotetramer; dimer of dimers. It depends on Mg(2+) as a cofactor. Requires K(+) as cofactor.

It is found in the cytoplasm. It carries out the reaction L-methionine + ATP + H2O = S-adenosyl-L-methionine + phosphate + diphosphate. It functions in the pathway amino-acid biosynthesis; S-adenosyl-L-methionine biosynthesis; S-adenosyl-L-methionine from L-methionine: step 1/1. In terms of biological role, catalyzes the formation of S-adenosylmethionine (AdoMet) from methionine and ATP. The overall synthetic reaction is composed of two sequential steps, AdoMet formation and the subsequent tripolyphosphate hydrolysis which occurs prior to release of AdoMet from the enzyme. In Kosmotoga olearia (strain ATCC BAA-1733 / DSM 21960 / TBF 19.5.1), this protein is S-adenosylmethionine synthase.